Consider the following 341-residue polypeptide: Ribosomal RNA small subunit methyltransferase H (341 aa).

S-adenosyl-L-methionine-binding positions include 47–49 (GGY), D64, F91, D109, and Q116. A disordered region spans residues 292–319 (VAASEEEASRNPRARSAKLRAGVRTEAP).

Belongs to the methyltransferase superfamily. RsmH family.

It localises to the cytoplasm. It carries out the reaction cytidine(1402) in 16S rRNA + S-adenosyl-L-methionine = N(4)-methylcytidine(1402) in 16S rRNA + S-adenosyl-L-homocysteine + H(+). Functionally, specifically methylates the N4 position of cytidine in position 1402 (C1402) of 16S rRNA. The protein is Ribosomal RNA small subunit methyltransferase H of Rhizobium meliloti (strain 1021) (Ensifer meliloti).